Consider the following 411-residue polypeptide: Probable tRNA pseudouridine synthase D (411 aa).

Aspartate 81 acts as the Nucleophile in catalysis. The region spanning 154–375 is the TRUD domain; the sequence is GTPNFFGLQR…SGSYRPADTL (222 aa).

Belongs to the pseudouridine synthase TruD family.

It carries out the reaction uridine(13) in tRNA = pseudouridine(13) in tRNA. Functionally, could be responsible for synthesis of pseudouridine from uracil-13 in transfer RNAs. This Archaeoglobus fulgidus (strain ATCC 49558 / DSM 4304 / JCM 9628 / NBRC 100126 / VC-16) protein is Probable tRNA pseudouridine synthase D.